A 445-amino-acid chain; its full sequence is Ribosomal protein uS12 methylthiotransferase RimO (445 aa).

Residues 4–119 (IKVALVSLGC…LLESIKVFLK (116 aa)) form the MTTase N-terminal domain. Residues C13, C48, C82, C156, C160, and C163 each contribute to the [4Fe-4S] cluster site. In terms of domain architecture, Radical SAM core spans 142 to 372 (TTPTYTAYVR…MILQQSISKD (231 aa)). The region spanning 375-441 (KEKIGKIYEV…EYDLIGVVYN (67 aa)) is the TRAM domain.

Belongs to the methylthiotransferase family. RimO subfamily. [4Fe-4S] cluster is required as a cofactor.

The protein resides in the cytoplasm. The enzyme catalyses L-aspartate(89)-[ribosomal protein uS12]-hydrogen + (sulfur carrier)-SH + AH2 + 2 S-adenosyl-L-methionine = 3-methylsulfanyl-L-aspartate(89)-[ribosomal protein uS12]-hydrogen + (sulfur carrier)-H + 5'-deoxyadenosine + L-methionine + A + S-adenosyl-L-homocysteine + 2 H(+). Its function is as follows. Catalyzes the methylthiolation of an aspartic acid residue of ribosomal protein uS12. The chain is Ribosomal protein uS12 methylthiotransferase RimO from Clostridium botulinum (strain Loch Maree / Type A3).